The chain runs to 103 residues: Large ribosomal subunit protein bL21 (103 aa).

The protein belongs to the bacterial ribosomal protein bL21 family. As to quaternary structure, part of the 50S ribosomal subunit. Contacts protein L20.

In terms of biological role, this protein binds to 23S rRNA in the presence of protein L20. In Caldicellulosiruptor saccharolyticus (strain ATCC 43494 / DSM 8903 / Tp8T 6331), this protein is Large ribosomal subunit protein bL21.